Here is a 680-residue protein sequence, read N- to C-terminus: MEEGGGSGVGGMQGAASNLLDAGAQAFYPAVGAPFPFQQLPHQLYCPQPPPPPYQVMPVSPPPPPVGLPVPPLPATMAPQPGYCVPAAATVVDGPASRAVVLSLVPPHAPEDEIARAMAPFGAVRAVDASAVASEGVATVYFFDLRSAEHAVTGVREQHIRQQCRLGQLYAAAAAAAASSPTWPPPAWDWPHDDNRGLVLGQAVWAHFAAASTVPDDGASRGSLVVLNSLPAMSVFELREIFQAYGDVKDVRESALRPSNKFVEFFDTRDADRALHELNGKELFGRRLVVEYTRPSLPGPRRRGHVSHQPLAPTPPRLQAAWRPAPAPSQSAQPSSSGSGKAREGVVLLRRSSGKGSSGSQSKGGGNAGHERKSKGGKSAAAACSTAASASSSTATAPSKQSQKGGGGRGGSWRGQKSGWEARFLFKEPEAAAAAAGDAAASETHEPASCKDTRTTVMIRNIPNKYSQKLLLNMLDNHCILSNQQIEASCEDEAQPFSSYDFLYLPIDFNNKCNVGYGFVNLTSPEAAVRLYKAFHKQPWEVFNSRKICQVTYARVQGLDALKEHFKNSKFPCDSDEYLPVVFSPPRDGKLLTEPVPLVGRSPAPSSASGASSPPKSCAASVDPLAQQLMTAPSSSGDGASSASSSNAHADEDDVHGETGGDRGDDAGLDLELQRLGYTD.

The 73-residue stretch at 223–295 (SLVVLNSLPA…RRLVVEYTRP (73 aa)) folds into the RRM domain. Disordered stretches follow at residues 294–415 (RPSL…SWRG) and 593–680 (TEPV…GYTD). 2 stretches are compositionally biased toward low complexity: residues 328–340 (PSQSAQPSSSGSG) and 379–403 (SAAAACSTAASASSSTATAPSKQSQ). The segment covering 404-413 (KGGGGRGGSW) has biased composition (gly residues). Low complexity-rich tracts occupy residues 602-621 (SPAPSSASGASSPPKSCAAS) and 634-648 (SSSGDGASSASSSNA). The segment covering 656 to 666 (HGETGGDRGDD) has biased composition (basic and acidic residues).

As to expression, highly expressed in shoot apex and inflorescence apex, at intermediate levels in roots and at low levels in leaf blade and leaf sheath.

Probable RNA-binding protein. Involved in the regular timing (plastochron) of lateral organs formation. May regulate the rate of leaf initiation and the duration of vegetative phase. Seems to be redundant to the function of PLASTOCHRON1, but to act in an independent pathway. The chain is Protein terminal ear1 homolog (PLA2) from Oryza sativa subsp. indica (Rice).